A 436-amino-acid chain; its full sequence is Trigger factor (436 aa).

A PPIase FKBP-type domain is found at 163–248 (GDRVVLDFAG…VKEVAEGVLP (86 aa)).

This sequence belongs to the FKBP-type PPIase family. Tig subfamily.

Its subcellular location is the cytoplasm. It catalyses the reaction [protein]-peptidylproline (omega=180) = [protein]-peptidylproline (omega=0). Involved in protein export. Acts as a chaperone by maintaining the newly synthesized protein in an open conformation. Functions as a peptidyl-prolyl cis-trans isomerase. This chain is Trigger factor, found in Bordetella bronchiseptica (strain ATCC BAA-588 / NCTC 13252 / RB50) (Alcaligenes bronchisepticus).